The sequence spans 209 residues: Type III pantothenate kinase (209 aa).

Position 5-12 (5-12) interacts with ATP; sequence DIGNSNAN. Residues Y68 and 72-75 contribute to the substrate site; that span reads GIDR. D74 functions as the Proton acceptor in the catalytic mechanism. D89 contributes to the K(+) binding site. S92 lines the ATP pocket. T144 is a binding site for substrate.

Belongs to the type III pantothenate kinase family. As to quaternary structure, homodimer. Requires NH4(+) as cofactor. The cofactor is K(+).

It localises to the cytoplasm. It carries out the reaction (R)-pantothenate + ATP = (R)-4'-phosphopantothenate + ADP + H(+). It functions in the pathway cofactor biosynthesis; coenzyme A biosynthesis; CoA from (R)-pantothenate: step 1/5. Catalyzes the phosphorylation of pantothenate (Pan), the first step in CoA biosynthesis. The protein is Type III pantothenate kinase of Campylobacter jejuni (strain RM1221).